The sequence spans 1343 residues: DNA-directed RNA polymerase subunit beta (1343 aa).

This sequence belongs to the RNA polymerase beta chain family. As to quaternary structure, the RNAP catalytic core consists of 2 alpha, 1 beta, 1 beta' and 1 omega subunit. When a sigma factor is associated with the core the holoenzyme is formed, which can initiate transcription.

It carries out the reaction RNA(n) + a ribonucleoside 5'-triphosphate = RNA(n+1) + diphosphate. DNA-dependent RNA polymerase catalyzes the transcription of DNA into RNA using the four ribonucleoside triphosphates as substrates. The protein is DNA-directed RNA polymerase subunit beta of Shewanella frigidimarina (strain NCIMB 400).